A 104-amino-acid chain; its full sequence is MSEFSNVTVIKKANIYFEGKVASHTVLFPDGTKKTLGIMQAGDYEFSTANAEVMEILSGTLEWQMKGECCWKTIGAGESFQIPADSVFLMKVPAVADYCCSYIQ.

This sequence belongs to the nucleoside phosphorylase PpnP family.

The enzyme catalyses a purine D-ribonucleoside + phosphate = a purine nucleobase + alpha-D-ribose 1-phosphate. It carries out the reaction adenosine + phosphate = alpha-D-ribose 1-phosphate + adenine. The catalysed reaction is cytidine + phosphate = cytosine + alpha-D-ribose 1-phosphate. It catalyses the reaction guanosine + phosphate = alpha-D-ribose 1-phosphate + guanine. The enzyme catalyses inosine + phosphate = alpha-D-ribose 1-phosphate + hypoxanthine. It carries out the reaction thymidine + phosphate = 2-deoxy-alpha-D-ribose 1-phosphate + thymine. The catalysed reaction is uridine + phosphate = alpha-D-ribose 1-phosphate + uracil. It catalyses the reaction xanthosine + phosphate = alpha-D-ribose 1-phosphate + xanthine. Catalyzes the phosphorolysis of diverse nucleosides, yielding D-ribose 1-phosphate and the respective free bases. Can use uridine, adenosine, guanosine, cytidine, thymidine, inosine and xanthosine as substrates. Also catalyzes the reverse reactions. The protein is Pyrimidine/purine nucleoside phosphorylase of Pelobacter propionicus (strain DSM 2379 / NBRC 103807 / OttBd1).